The primary structure comprises 220 residues: Octanoyltransferase (220 aa).

The BPL/LPL catalytic domain maps to 34–209 (ENSQDEIWVV…TLSQELGLAN (176 aa)). Substrate is bound by residues 73 to 80 (RGGQVTYH), 140 to 142 (SLG), and 153 to 155 (GLA). Cys171 serves as the catalytic Acyl-thioester intermediate.

The protein belongs to the LipB family.

It is found in the cytoplasm. It carries out the reaction octanoyl-[ACP] + L-lysyl-[protein] = N(6)-octanoyl-L-lysyl-[protein] + holo-[ACP] + H(+). It participates in protein modification; protein lipoylation via endogenous pathway; protein N(6)-(lipoyl)lysine from octanoyl-[acyl-carrier-protein]: step 1/2. Its function is as follows. Catalyzes the transfer of endogenously produced octanoic acid from octanoyl-acyl-carrier-protein onto the lipoyl domains of lipoate-dependent enzymes. Lipoyl-ACP can also act as a substrate although octanoyl-ACP is likely to be the physiological substrate. In Shewanella piezotolerans (strain WP3 / JCM 13877), this protein is Octanoyltransferase.